Consider the following 456-residue polypeptide: Endoglucanase A (456 aa).

An N-terminal signal peptide occupies residues 1–30; the sequence is MSRIRRFLATALAAATAGVGAIVTAIASAG. Residues 31 to 322 form a catalytic region; it reads PAHAYDSPFY…RAYELAMNAA (292 aa). The active site involves D113. 2 cysteine pairs are disulfide-bonded: C114/C159 and C267/C302. D151 functions as the Proton donor in the catalytic mechanism. The tract at residues 255–280 is disordered; it reads SRNGNGPLGSEWCDPPGRATGTWSTT. D300 (nucleophile) is an active-site residue. The tract at residues 321-358 is disordered; sequence AAPPTYSPSPTPSTPSPSPSQSDPGSPSPSPSQPPAGR. The segment at 323–355 is linker ('hinge') (Pro-Ser box); that stretch reads PPTYSPSPTPSTPSPSPSQSDPGSPSPSPSQPP. Pro residues predominate over residues 325 to 338; sequence TYSPSPTPSTPSPS. The CBM2 domain maps to 353–456; the sequence is QPPAGRACEA…LSSSITCSAS (104 aa). A disulfide bond links C360 and C453.

The protein belongs to the glycosyl hydrolase 6 (cellulase B) family.

The enzyme catalyses Endohydrolysis of (1-&gt;4)-beta-D-glucosidic linkages in cellulose, lichenin and cereal beta-D-glucans.. The protein is Endoglucanase A (celA) of Thermobispora bispora (Microbispora bispora).